The chain runs to 937 residues: Inactive tyrosine-protein kinase transmembrane receptor ROR1 (937 aa).

The first 29 residues, 1 to 29 (MHRPRRRGTRPPPLALLAALLLAARGADA), serve as a signal peptide directing secretion. Residues 30–406 (QETELSVSAE…KEKNKMEILY (377 aa)) are Extracellular-facing. In terms of domain architecture, Ig-like C2-type spans 42–141 (PTSSWNTSSE…VATNGKKVVS (100 aa)). N-linked (GlcNAc...) asparagine glycosylation is found at asparagine 47 and asparagine 66. 9 disulfide bridges follow: cysteine 79-cysteine 131, cysteine 170-cysteine 235, cysteine 178-cysteine 228, cysteine 219-cysteine 260, cysteine 248-cysteine 296, cysteine 252-cysteine 282, cysteine 313-cysteine 391, cysteine 334-cysteine 374, and cysteine 362-cysteine 386. Positions 165 to 299 (EEDGFCQPYR…SPEAANCIRI (135 aa)) constitute an FZ domain. N-linked (GlcNAc...) asparagine glycosylation occurs at asparagine 184. Residues 312–391 (KCYNSTGVDY…KSDLCDIPAC (80 aa)) enclose the Kringle domain. An N-linked (GlcNAc...) asparagine glycan is attached at asparagine 315. Residues 407-427 (ILVPSVAIPLAIAFLFFFICV) form a helical membrane-spanning segment. The Cytoplasmic portion of the chain corresponds to 428-937 (CRNNQKSSSP…HTESMISAEV (510 aa)). Positions 473–746 (VRFMEELGEC…PRFKDIHVRL (274 aa)) constitute a Protein kinase domain. ATP contacts are provided by residues 479–487 (LGECTFGKI) and lysine 506. Tyrosine 645 is subject to Phosphotyrosine; by autocatalysis. Low complexity predominate over residues 753-762 (SSHTSSTTPS). Disordered stretches follow at residues 753–778 (SSHTSSTTPSGGNATTQTTSLSASPV), 840–890 (GPPR…HMSI), and 916–937 (QSSLLGDSHIHGHTESMISAEV). Over residues 763-778 (GGNATTQTTSLSASPV) the composition is skewed to polar residues. Positions 854–864 (RSPSSASGSTS) are enriched in low complexity. Residues 865-880 (TGHVASLPSSGSNQEA) show a composition bias toward polar residues.

The protein belongs to the protein kinase superfamily. Tyr protein kinase family. ROR subfamily. In terms of assembly, interacts with ERBB2 and IGFBP5. As to expression, at postnatal P0, expressed in heart, lung, liver, kidney, spleen and inner ear.

It is found in the membrane. Its subcellular location is the cell projection. The protein localises to the axon. Functionally, has very low kinase activity in vitro and is unlikely to function as a tyrosine kinase in vivo. Receptor for ligand WNT5A which activate downstream NFkB signaling pathway and may result in the inhibition of WNT3A-mediated signaling. In inner ear, crucial for spiral ganglion neurons to innervate auditory hair cells. Via IGFBP5 ligand, forms a complex with ERBB2 to enhance CREB oncogenic signaling. The chain is Inactive tyrosine-protein kinase transmembrane receptor ROR1 (Ror1) from Mus musculus (Mouse).